The sequence spans 347 residues: Autoinducer 2 import system permease protein LsrC (347 aa).

The next 9 membrane-spanning stretches (helical) occupy residues leucine 14–valine 34, methionine 39–leucine 59, glycine 72–cysteine 92, leucine 93–leucine 113, isoleucine 115–tryptophan 135, valine 155–tryptophan 175, leucine 213–proline 233, valine 249–alanine 269, and isoleucine 284–aspartate 304.

Belongs to the binding-protein-dependent transport system permease family. AraH/RbsC subfamily. The complex is composed of two ATP-binding proteins (LsrA), two transmembrane proteins (LsrC and LsrD) and a solute-binding protein (LsrB).

It localises to the cell inner membrane. Its function is as follows. Part of the ABC transporter complex LsrABCD involved in autoinducer 2 (AI-2) import. Probably responsible for the translocation of the substrate across the membrane. This Salmonella choleraesuis (strain SC-B67) protein is Autoinducer 2 import system permease protein LsrC (lsrC).